A 248-amino-acid chain; its full sequence is 2,3-bisphosphoglycerate-dependent phosphoglycerate mutase (248 aa).

Residues 8 to 15 (RHGESTWN), 21 to 22 (TG), R60, 87 to 90 (ERHY), K98, 114 to 115 (RR), and 183 to 184 (GN) each bind substrate. Residue H9 is the Tele-phosphohistidine intermediate of the active site. E87 functions as the Proton donor/acceptor in the catalytic mechanism.

It belongs to the phosphoglycerate mutase family. BPG-dependent PGAM subfamily. In terms of assembly, homodimer.

It catalyses the reaction (2R)-2-phosphoglycerate = (2R)-3-phosphoglycerate. It participates in carbohydrate degradation; glycolysis; pyruvate from D-glyceraldehyde 3-phosphate: step 3/5. In terms of biological role, catalyzes the interconversion of 2-phosphoglycerate and 3-phosphoglycerate. This Paraburkholderia phymatum (strain DSM 17167 / CIP 108236 / LMG 21445 / STM815) (Burkholderia phymatum) protein is 2,3-bisphosphoglycerate-dependent phosphoglycerate mutase.